The chain runs to 127 residues: Aspartate 1-decarboxylase (127 aa).

The Schiff-base intermediate with substrate; via pyruvic acid role is filled by S25. At S25 the chain carries Pyruvic acid (Ser). T57 provides a ligand contact to substrate. Y58 (proton donor) is an active-site residue. 73 to 75 (GAA) contacts substrate.

The protein belongs to the PanD family. Heterooctamer of four alpha and four beta subunits. Pyruvate is required as a cofactor. Post-translationally, is synthesized initially as an inactive proenzyme, which is activated by self-cleavage at a specific serine bond to produce a beta-subunit with a hydroxyl group at its C-terminus and an alpha-subunit with a pyruvoyl group at its N-terminus.

It is found in the cytoplasm. The catalysed reaction is L-aspartate + H(+) = beta-alanine + CO2. The protein operates within cofactor biosynthesis; (R)-pantothenate biosynthesis; beta-alanine from L-aspartate: step 1/1. Catalyzes the pyruvoyl-dependent decarboxylation of aspartate to produce beta-alanine. The sequence is that of Aspartate 1-decarboxylase from Bacillus cereus (strain ATCC 10987 / NRS 248).